The primary structure comprises 255 residues: tRNA (guanine-N(1)-)-methyltransferase (255 aa).

S-adenosyl-L-methionine is bound by residues Gly117 and 137 to 142 (IGDYVL).

The protein belongs to the RNA methyltransferase TrmD family. As to quaternary structure, homodimer.

The protein localises to the cytoplasm. It catalyses the reaction guanosine(37) in tRNA + S-adenosyl-L-methionine = N(1)-methylguanosine(37) in tRNA + S-adenosyl-L-homocysteine + H(+). In terms of biological role, specifically methylates guanosine-37 in various tRNAs. The polypeptide is tRNA (guanine-N(1)-)-methyltransferase (Glaesserella parasuis serovar 5 (strain SH0165) (Haemophilus parasuis)).